A 130-amino-acid polypeptide reads, in one-letter code: Protein ApaG (130 aa).

Residues 3-127 (KAETRGISVI…FSLDVPHMRR (125 aa)) enclose the ApaG domain.

The chain is Protein ApaG from Methylobacterium nodulans (strain LMG 21967 / CNCM I-2342 / ORS 2060).